We begin with the raw amino-acid sequence, 493 residues long: Aerolysin (493 aa).

Positions 1–23 (MQKIKLTGLSLIISGLLMAQAQA) are cleaved as a signal peptide. 2 disulfide bridges follow: Cys-42–Cys-98 and Cys-182–Cys-187. Residues 68-84 (WQISGLANGWVIMGPGY) form an interaction with host N-linked glycan region. A part of the transmembrane beta-barrel after proteolytic activation of the toxin and insertion into the host membrane region spans residues 256–288 (YGLSEKVTTKNKFKWPLVGETELSIEIAANQSW). The interval 346–355 (RWGGNAWYTH) is interaction with glycans from host GPI-anchor. A propeptide spanning residues 446–493 (AADSKVRRARSVDGAGQGLRLEIPLDAQELSGLGFNNVSLSVTPAANQ) is cleaved from the precursor.

This sequence belongs to the aerolysin family. In terms of assembly, homodimer in solution; homoheptamer in the host membrane. After binding to GPI-anchored proteins in target membranes and proteolytic removal of the C-terminal propeptide, the protein assembles into a heptameric pre-pore complex. A further conformation change leads to insertion into the host membrane. Post-translationally, proteolytic cleavage and subsequent release of the propeptide trigger a major conformation change, leading to the formation of a heptameric pre-pore that then inserts into the host membrane.

It is found in the secreted. Its subcellular location is the host cell membrane. In terms of biological role, secreted, cytolytic toxin that forms pores in host membranes after proteolytic removal of a C-terminal propeptide, leading to destruction of the membrane permeability barrier and host cell death. The pores are formed by transmembrane beta-strands and are approximately 3 nm in diameter. This chain is Aerolysin (aerA), found in Aeromonas hydrophila.